Here is a 433-residue protein sequence, read N- to C-terminus: Serine/threonine-protein kinase DCLK1 (433 aa).

The tract at residues 1–74 (MLELIEVNGT…GEEESDEGFQ (74 aa)) is disordered. Residues serine 23, serine 25, serine 27, serine 30, serine 40, serine 45, serine 46, serine 48, serine 57, and serine 69 each carry the phosphoserine modification. A compositionally biased stretch (low complexity) spans 40–57 (SQHGGSSTSLSSTKVCSS). The segment covering 59–71 (DENDGPGEEESDE) has biased composition (acidic residues). Residues 83 to 340 (YKVGRTIGDG…AVQVLEHPWV (258 aa)) form the Protein kinase domain. ATP is bound by residues 89 to 97 (IGDGNFAVV) and lysine 112. Residue aspartate 204 is the Proton acceptor of the active site. Tyrosine 213 is subject to Phosphotyrosine. Over residues 388-400 (QVFRRRRNQDVRG) the composition is skewed to basic and acidic residues. The interval 388–433 (QVFRRRRNQDVRGRYKAQPAPPELNSESEDYSPSSSETVRSPNSPF) is disordered. A phosphoserine mark is found at serine 419, serine 428, and serine 431.

It belongs to the protein kinase superfamily. CAMK Ser/Thr protein kinase family. CaMK subfamily.

It catalyses the reaction L-seryl-[protein] + ATP = O-phospho-L-seryl-[protein] + ADP + H(+). It carries out the reaction L-threonyl-[protein] + ATP = O-phospho-L-threonyl-[protein] + ADP + H(+). In terms of biological role, probable kinase that may be involved in a calcium-signaling pathway controlling neuronal migration in the developing brain. May also participate in functions of the mature nervous system. This is Serine/threonine-protein kinase DCLK1 (Dclk1) from Rattus norvegicus (Rat).